The chain runs to 560 residues: Putative transport protein VV1438 (560 aa).

A run of 5 helical transmembrane segments spans residues 5-25 (VVLL…AIGL), 37-57 (LGNS…GFSF), 66-86 (FMLF…GIFF), 91-111 (HYFT…YFAS), and 164-184 (VGYA…AKLL). RCK C-terminal domains follow at residues 203–292 (RGLG…FRNG) and 293–376 (KEVF…RIGF). Helical transmembrane passes span 386–406 (LLAF…TMTF), 409–429 (VSFS…LGFL), 443–463 (ALNM…GLSA), 478–498 (IIGI…LVGA), 506–526 (ALLF…DIVN), and 539–559 (AGTY…LIIL).

This sequence belongs to the AAE transporter (TC 2.A.81) family. YbjL subfamily.

Its subcellular location is the cell membrane. The sequence is that of Putative transport protein VV1438 from Vibrio vulnificus (strain YJ016).